Consider the following 100-residue polypeptide: Enhancer of yellow 2 transcription factor (100 aa).

Belongs to the ENY2 family. In terms of assembly, component of the nuclear pore complex (NPC)-associated AMEX complex (anchoring and mRNA export complex), composed of at least e(y)2 and xmas-2. Component of the SAGA transcription coactivator-HAT complexes, at least composed of Ada2b, e(y)2, Pcaf/Gcn5, Taf10 and Nipped-A/Trrap. Within the SAGA complex, e(y)2, Sgf11, and not/nonstop form an additional subcomplex of SAGA called the DUB module (deubiquitination module). Component of the THO complex, composed of at least e(y)2, HPR1, THO2, THOC5, THOC6 and THOC7. Interacts with e(y)1. Interacts with su(Hw) (via zinc fingers). Interacts with xmas-2; required for localization to the nuclear periphery. Interacts with the nuclear pore complex (NPC).

Its subcellular location is the nucleus. It localises to the nucleoplasm. The protein localises to the cytoplasm. Functionally, involved in mRNA export coupled transcription activation by association with both the AMEX and the SAGA complexes. The SAGA complex is a multiprotein complex that activates transcription by remodeling chromatin and mediating histone acetylation and deubiquitination. Within the SAGA complex, participates in a subcomplex that specifically deubiquitinates histone H2B. The SAGA complex is recruited to specific gene promoters by activators, where it is required for transcription. Required for nuclear receptor-mediated transactivation. Involved in transcription elongation by recruiting the THO complex onto nascent mRNA. The AMEX complex functions in docking export-competent ribonucleoprotein particles (mRNPs) to the nuclear entrance of the nuclear pore complex (nuclear basket). AMEX participates in mRNA export and accurate chromatin positioning in the nucleus by tethering genes to the nuclear periphery. This chain is Enhancer of yellow 2 transcription factor, found in Drosophila ananassae (Fruit fly).